Here is a 256-residue protein sequence, read N- to C-terminus: Alcohol dehydrogenase (256 aa).

12–35 provides a ligand contact to NAD(+); it reads FVAGLGGIGLDTSKELVKRDLKNL. Ser140 contributes to the substrate binding site. The active-site Proton acceptor is the Tyr153.

This sequence belongs to the short-chain dehydrogenases/reductases (SDR) family. In terms of assembly, homodimer.

The enzyme catalyses a primary alcohol + NAD(+) = an aldehyde + NADH + H(+). The catalysed reaction is a secondary alcohol + NAD(+) = a ketone + NADH + H(+). In Drosophila mauritiana (Fruit fly), this protein is Alcohol dehydrogenase (Adh).